The primary structure comprises 155 residues: HTH-type transcriptional regulator IscR (155 aa).

Positions 2–136 constitute an HTH rrf2-type domain; sequence KLSTKGRYAM…HQTRLSDIIK (135 aa). The H-T-H motif DNA-binding region spans 30–53; that stretch reads LAEVSKRQDISLPYLEQLFVKLRR. Residues 141 to 145 are heme regulatory motif (HRM); it reads PCPAV. Position 142 (Cys-142) interacts with [2Fe-2S] cluster.

[2Fe-2S] cluster serves as cofactor.

In terms of biological role, regulates the transcription of several operons and genes involved in the biogenesis of Fe-S clusters and Fe-S-containing proteins. Functions as a transcriptional repressor of genes involved in iron metabolism by directly binding to the promoter region of genes preceded by the Iron-Rhodo-box motif. Binds to iscR and hemP promoter regions independently of an Fe-S cluster, but their transcriptional repression is Fe-S cluster-dependent. Seems to activate some target genes in a Fe-S cluster-independent manner. Negatively regulates its own transcription in the presence of iron only. This is HTH-type transcriptional regulator IscR from Cereibacter sphaeroides (strain ATCC 17023 / DSM 158 / JCM 6121 / CCUG 31486 / LMG 2827 / NBRC 12203 / NCIMB 8253 / ATH 2.4.1.) (Rhodobacter sphaeroides).